The following is a 131-amino-acid chain: Fluoride-specific ion channel FluC 2 (131 aa).

Transmembrane regions (helical) follow at residues 5 to 25 (FGVA…SLLV), 39 to 59 (LATL…TTLA), 70 to 90 (LAVG…AWES), and 104 to 124 (LYVL…RALA). Na(+) contacts are provided by glycine 78 and threonine 81.

The protein belongs to the fluoride channel Fluc/FEX (TC 1.A.43) family.

The protein localises to the cell membrane. It catalyses the reaction fluoride(in) = fluoride(out). Na(+) is not transported, but it plays an essential structural role and its presence is essential for fluoride channel function. Functionally, fluoride-specific ion channel. Important for reducing fluoride concentration in the cell, thus reducing its toxicity. This Deinococcus geothermalis (strain DSM 11300 / CIP 105573 / AG-3a) protein is Fluoride-specific ion channel FluC 2.